The following is a 619-amino-acid chain: Eukaryotic translation initiation factor 2-alpha kinase 1 (619 aa).

The disordered stretch occupies residues 1–40; the sequence is MLGGSSVDGERDTDDDAAGAVAAPPAIDFPAEVSDPKYDE. The span at 18 to 28 shows a compositional bias: low complexity; that stretch reads AGAVAAPPAID. The short motif at 85 to 104 is the SIFI-degron element; that stretch reads LHSKQVFKLLCQTFIKMGLL. A Protein kinase domain is found at 167 to 580; that stretch reads FEELAILGKG…ALQLLQSELF (414 aa). ATP-binding positions include 173 to 181 and K196; that span reads LGKGGYGRV. Residue T283 is modified to Phosphothreonine. An HRM 1 repeat occupies 408 to 413; the sequence is ACPYVM. Residue D440 is the Proton acceptor of the active site. Phosphothreonine; by autocatalysis occurs at positions 483, 485, and 490. An HRM 2 repeat occupies 549–554; the sequence is RCPVQA.

It belongs to the protein kinase superfamily. Ser/Thr protein kinase family. GCN2 subfamily. Synthesized in an inactive form that binds to the N-terminal domain of CDC37. Has to be associated with a multiprotein complex containing Hsp90, CDC37 and PPP5C for maturation and activation by autophosphorylation. The phosphatase PPP5C modulates this activation. Homodimer; homodimerizes in presence of heme, forming a disulfide-linked inactive homodimer. Interacts with DELE1; binds both to full-length DELE1 and processed form of DELE1 (S-DELE1) in response to stress, leading to activate its protein kinase activity and trigger the integrated stress response (ISR). Activated by autophosphorylation; phosphorylated predominantly on serine and threonine residues, but also on tyrosine residues. Autophosphorylation at Thr-485 is required for kinase activation. The active autophosphorylated form apparently is largely refractory to cellular heme fluctuations. Post-translationally, ubiquitinated and degraded by the SIFI complex once the mitochondrial stress has been resolved, thereby providing stress response silencing. Within the SIFI complex, UBR4 initiates ubiquitin chain that are further elongated or branched by KCMF1. As to expression, expressed predominantly in erythroid cells, mature reticulocytes, as well as fetal liver nucleated erythroid cells. At much lower levels, expressed in hepatocytes and bone marrow-derived macrophages (at protein level).

It localises to the cytoplasm. The catalysed reaction is L-seryl-[protein] + ATP = O-phospho-L-seryl-[protein] + ADP + H(+). The enzyme catalyses L-threonyl-[protein] + ATP = O-phospho-L-threonyl-[protein] + ADP + H(+). In normal conditions, the protein kinase activity is inhibited; inhibition is relieved by various stress conditions. Inhibited by heme: in presence of heme, forms a disulfide-linked inactive homodimer. Heme depletion relieves inhibition and stimulates kinase activity by autophosphorylation. Inhibited by the heme metabolites biliverdin and bilirubin. Induced by oxidative stress generated by arsenite treatment. Binding of nitric oxide (NO) to the heme iron in the N-terminal heme-binding domain activates the kinase activity, while binding of carbon monoxide (CO) suppresses kinase activity. Protein kinase activity is also activated upon binding to DELE1 in response to various stress, triggering the integrated stress response (ISR): activated by full-length DELE1 in response to iron deficiency, while it is activated by the processed form of DELE1 (S-DELE1) in response to mitochondrial stress. Metabolic-stress sensing protein kinase that phosphorylates the alpha subunit of eukaryotic translation initiation factor 2 (EIF2S1/eIF-2-alpha) in response to various stress conditions. Key activator of the integrated stress response (ISR) required for adaptation to various stress, such as heme deficiency, oxidative stress, osmotic shock, mitochondrial dysfunction and heat shock. EIF2S1/eIF-2-alpha phosphorylation in response to stress converts EIF2S1/eIF-2-alpha in a global protein synthesis inhibitor, leading to a global attenuation of cap-dependent translation, while concomitantly initiating the preferential translation of ISR-specific mRNAs, such as the transcriptional activator ATF4, and hence allowing ATF4-mediated reprogramming. Acts as a key sensor of heme-deficiency: in normal conditions, binds hemin via a cysteine thiolate and histidine nitrogenous coordination, leading to inhibit the protein kinase activity. This binding occurs with moderate affinity, allowing it to sense the heme concentration within the cell: heme depletion relieves inhibition and stimulates kinase activity, activating the ISR. Thanks to this unique heme-sensing capacity, plays a crucial role to shut off protein synthesis during acute heme-deficient conditions. In red blood cells (RBCs), controls hemoglobin synthesis ensuring a coordinated regulation of the synthesis of its heme and globin moieties. It thereby plays an essential protective role for RBC survival in anemias of iron deficiency. Iron deficiency also triggers activation by full-length DELE1. Also activates the ISR in response to mitochondrial dysfunction: HRI/EIF2AK1 protein kinase activity is activated upon binding to the processed form of DELE1 (S-DELE1), thereby promoting the ATF4-mediated reprogramming. Also acts as an activator of mitophagy in response to mitochondrial damage: catalyzes phosphorylation of eIF-2-alpha (EIF2S1) following activation by S-DELE1, thereby promoting mitochondrial localization of EIF2S1, triggering PRKN-independent mitophagy. The sequence is that of Eukaryotic translation initiation factor 2-alpha kinase 1 from Mus musculus (Mouse).